Here is a 101-residue protein sequence, read N- to C-terminus: MKPGEIIAAEGTIELNAGQPTVTIEVANSGDRPVQVGSHYHFFETNAGLLFDRDKARGMRLDIPAGTAVRFEPGQKREVTLVPLSGKREVYGFRQQIMGRL.

It belongs to the urease beta subunit family. Heterotrimer of UreA (gamma), UreB (beta) and UreC (alpha) subunits. Three heterotrimers associate to form the active enzyme.

The protein localises to the cytoplasm. It catalyses the reaction urea + 2 H2O + H(+) = hydrogencarbonate + 2 NH4(+). Its pathway is nitrogen metabolism; urea degradation; CO(2) and NH(3) from urea (urease route): step 1/1. The sequence is that of Urease subunit beta from Agrobacterium fabrum (strain C58 / ATCC 33970) (Agrobacterium tumefaciens (strain C58)).